Here is a 456-residue protein sequence, read N- to C-terminus: Potassium voltage-gated channel subfamily A member 7 (456 aa).

A helical transmembrane segment spans residues 144 to 164; sequence VLAVVSVLVILVSIVVFCLET. N-linked (GlcNAc...) asparagine glycosylation is present at N191. A helical transmembrane segment spans residues 209 to 229; that stretch reads FFVVETLCICWFSFELLVRLL. C231 carries S-palmitoyl cysteine lipidation. Residues 241-261 traverse the membrane as a helical segment; the sequence is VMNLIDFVAILPYFVALGTEL. The helical; Voltage-sensor transmembrane segment at 276 to 295 threads the bilayer; sequence ILRVIRLVRVFRIFKLSRHS. A helical transmembrane segment spans residues 312–332; sequence LGLLIFFLFIGVVLFSSAVYF. The short motif at 358 to 363 is the Selectivity filter element; it reads TVGYGD. A helical transmembrane segment spans residues 373–393; sequence IVGSLCAIAGVLTISLPVPVI.

This sequence belongs to the potassium channel family. A (Shaker) (TC 1.A.1.2) subfamily. Kv1.7/KCNA7 sub-subfamily. As to quaternary structure, heterotetramer of potassium channel proteins. In terms of tissue distribution, highly expressed in skeletal muscle, heart and kidney.

Its subcellular location is the membrane. It catalyses the reaction K(+)(in) = K(+)(out). In terms of biological role, mediates the voltage-dependent potassium ion permeability of excitable membranes. Assuming opened or closed conformations in response to the voltage difference across the membrane, the protein forms a potassium-selective channel through which potassium ions may pass in accordance with their electrochemical gradient. This chain is Potassium voltage-gated channel subfamily A member 7 (KCNA7), found in Homo sapiens (Human).